The chain runs to 447 residues: Sulfoquinovose isomerase (447 aa).

Belongs to the SqvD family.

The enzyme catalyses 6-sulfo-beta-D-quinovose = 6-deoxy-6-sulfo-D-fructose. Part of the sulfo-TK pathway, a D-sulfoquinovose degradation pathway that produces 2-hydroxyethane-1-sulfonate (isethionate). Catalyzes the isomerization of sulfoquinovose (SQ) to 6-deoxy-6-sulfo-D-fructose (SF). In Clostridium sp. (strain MSTE9), this protein is Sulfoquinovose isomerase.